The following is a 215-amino-acid chain: Octanoyltransferase (215 aa).

Residues threonine 31 to glutamate 206 enclose the BPL/LPL catalytic domain. Residues arginine 70–histidine 77, serine 137–glycine 139, and glycine 150–alanine 152 each bind substrate. Catalysis depends on cysteine 168, which acts as the Acyl-thioester intermediate.

This sequence belongs to the LipB family.

It is found in the cytoplasm. The catalysed reaction is octanoyl-[ACP] + L-lysyl-[protein] = N(6)-octanoyl-L-lysyl-[protein] + holo-[ACP] + H(+). It functions in the pathway protein modification; protein lipoylation via endogenous pathway; protein N(6)-(lipoyl)lysine from octanoyl-[acyl-carrier-protein]: step 1/2. Catalyzes the transfer of endogenously produced octanoic acid from octanoyl-acyl-carrier-protein onto the lipoyl domains of lipoate-dependent enzymes. Lipoyl-ACP can also act as a substrate although octanoyl-ACP is likely to be the physiological substrate. The polypeptide is Octanoyltransferase (Pseudomonas fluorescens (strain SBW25)).